A 421-amino-acid chain; its full sequence is POU domain, class 4, transcription factor 1 (421 aa).

A POU-IV box motif is present at residues Arg-57–Ile-66. Disordered regions lie at residues Ser-94 to Leu-117 and Gly-133 to His-200. The span at Ala-99 to His-108 shows a compositional bias: basic residues. The span at Gly-133–Gly-186 shows a compositional bias: gly residues. The POU-specific domain occupies Asp-262–Glu-339. Residues Lys-357–Lys-416 constitute a DNA-binding region (homeobox).

Belongs to the POU transcription factor family. Class-4 subfamily. Interacts (via N-terminus) with RIT2; the interaction controls POU4F1 transactivation activity on some neuronal target genes. Isoform 1 interacts with POU4F2 isoform 2; this interaction inhibits both POU4F1 DNA-binding and transcriptional activities. Isoform 1 interacts (C-terminus) with ESR1 (via DNA-binding domain); this interaction decreases the estrogen receptor ESR1 transcriptional activity in a DNA- and ligand 17-beta-estradiol-independent manner. Expressed in mature osteoclasts (at protein level). Brain, peripheral sensory nervous system and retina. In the adult nervous system, predominates in the medial habenula, superficial gray of the superior colliculus, red nucleus, mesencephalic nucleus of the trigeminal ganglion, nucleus ambiguus, inferior olivary nucleus, and peripheral sensory ganglia.

It is found in the nucleus. Its subcellular location is the cytoplasm. Functionally, multifunctional transcription factor with different regions mediating its different effects. Acts by binding (via its C-terminal domain) to sequences related to the consensus octamer motif 5'-ATGCAAAT-3' in the regulatory regions of its target genes. Regulates the expression of specific genes involved in differentiation and survival within a subset of neuronal lineages. It has been shown that activation of some of these genes requires its N-terminal domain, maybe through a neuronal-specific cofactor. Activates BCL2 expression and protects neuronal cells from apoptosis (via the N-terminal domain). Induces neuronal process outgrowth and the coordinate expression of genes encoding synaptic proteins. Exerts its major developmental effects in somatosensory neurons and in brainstem nuclei involved in motor control. Stimulates the binding affinity of the nuclear estrogene receptor ESR1 to DNA estrogen response element (ERE), and hence modulates ESR1-induced transcriptional activity. May positively regulate POU4F2 and POU4F3. Regulates dorsal root ganglion sensory neuron specification and axonal projection into the spinal cord. Plays a role in TNFSF11-mediated terminal osteoclast differentiation. Negatively regulates its own expression interacting directly with a highly conserved autoregulatory domain surrounding the transcription initiation site. Its function is as follows. Able to act as transcription factor, cannot regulate the expression of the same subset of genes than isoform 1. Does not have antiapoptotic effect on neuronal cells. The polypeptide is POU domain, class 4, transcription factor 1 (Pou4f1) (Mus musculus (Mouse)).